Consider the following 249-residue polypeptide: Undecaprenyl-diphosphatase (249 aa).

Transmembrane regions (helical) follow at residues 11–31 (GLTE…TAIF), 35–55 (PDVG…LIFV), 80–100 (LVLS…FIES), 101–121 (VFSS…LMLL), 135–155 (IPYL…LPGI), 180–200 (FLMS…KVAF), 202–222 (TEQI…LYLV), and 226–246 (VIGG…FFVL).

The protein belongs to the UppP family.

The protein localises to the cell membrane. The enzyme catalyses di-trans,octa-cis-undecaprenyl diphosphate + H2O = di-trans,octa-cis-undecaprenyl phosphate + phosphate + H(+). Catalyzes the dephosphorylation of undecaprenyl diphosphate (UPP). The protein is Undecaprenyl-diphosphatase of Methanococcus maripaludis (strain C6 / ATCC BAA-1332).